The primary structure comprises 86 residues: Centromere protein W (86 aa).

It belongs to the CENP-W/WIP1 family. Heterodimer with CENPT; this dimer coassembles with CENPS-CENPX heterodimers at centromeres to form the tetrameric CENP-T-W-S-X complex, which is a subcomplex of the large constitutive centromere-associated network (CCAN, also known as the interphase centromere complex or ICEN). Interacts with NPM1.

The protein localises to the nucleus. It localises to the chromosome. The protein resides in the centromere. It is found in the kinetochore. Its subcellular location is the nucleus matrix. The protein localises to the nucleolus. In terms of biological role, component of the CENPA-NAC (nucleosome-associated) complex, a complex that plays a central role in assembly of kinetochore proteins, mitotic progression and chromosome segregation. The CENPA-NAC complex recruits the CENPA-CAD (nucleosome distal) complex and may be involved in incorporation of newly synthesized CENPA into centromeres. Part of a nucleosome-associated complex that binds specifically to histone H3-containing nucleosomes at the centromere, as opposed to nucleosomes containing CENPA. Component of the heterotetrameric CENP-T-W-S-X complex that binds and supercoils DNA, and plays an important role in kinetochore assembly. CENPW has a fundamental role in kinetochore assembly and function. It is one of the inner kinetochore proteins, with most further proteins binding downstream. Required for normal chromosome organization and normal progress through mitosis. This chain is Centromere protein W (Cenpw), found in Rattus norvegicus (Rat).